A 386-amino-acid polypeptide reads, in one-letter code: Outer membrane protein assembly factor BamB (386 aa).

The signal sequence occupies residues 1 to 25; sequence MMRNSRPGRAWRGAVVLTGLLALSG. The N-palmitoyl cysteine moiety is linked to residue C26. C26 is lipidated: S-diacylglycerol cysteine.

The protein belongs to the BamB family. In terms of assembly, part of the Bam complex.

The protein localises to the cell outer membrane. In terms of biological role, part of the outer membrane protein assembly complex, which is involved in assembly and insertion of beta-barrel proteins into the outer membrane. This is Outer membrane protein assembly factor BamB from Bordetella pertussis (strain Tohama I / ATCC BAA-589 / NCTC 13251).